The primary structure comprises 311 residues: Coproporphyrin III ferrochelatase (311 aa).

Fe-coproporphyrin III contacts are provided by residues tyrosine 12, arginine 29, 45–46 (RY), serine 53, and tyrosine 124. Fe(2+) is bound by residues histidine 182 and glutamate 263.

Belongs to the ferrochelatase family.

Its subcellular location is the cytoplasm. The catalysed reaction is Fe-coproporphyrin III + 2 H(+) = coproporphyrin III + Fe(2+). The protein operates within porphyrin-containing compound metabolism; protoheme biosynthesis. In terms of biological role, involved in coproporphyrin-dependent heme b biosynthesis. Catalyzes the insertion of ferrous iron into coproporphyrin III to form Fe-coproporphyrin III. This is Coproporphyrin III ferrochelatase from Bacillus mycoides (strain KBAB4) (Bacillus weihenstephanensis).